A 186-amino-acid chain; its full sequence is Protein M2-1 (186 aa).

A C3H1-type zinc finger spans residues 1 to 28 (MSRRNPCKYEIRGHCLNGKKCHFSHNYF). The interval 32-49 (PHALLVRQNFMLNKILKS) is oligomerization. 2 positions are modified to phosphoserine; by host: serine 58 and serine 61. A globular core region spans residues 76–171 (VIGVLESYLS…KNTIDIHNEI (96 aa)). The interval 126 to 163 (RIYNTVISYIDSNKRNTKQTIHLLKRLPADVLKKTIKN) is binding to the phosphoprotein.

The protein belongs to the pneumoviridae M2-1 protein family. Homotetramer. The homotetramer interacts with RNA. Interacts with the phosphoprotein (P); this interaction is required for protein M2-1 function, localization in host inclusion bodies. Formation of a complex host PP1/M2-1/P allows P to target host PP1 phosphatase to the M2-1 substrate. Interacts with the nucleoprotein (N). Interacts with the matrix protein (M); this interaction directs M localization to cytoplasmic inclusions comprising viral proteins L, N, P, and M2-1 and mediates M association with the nucleocapsid. Interacts with host PABPC1 (via C-terminus). Phosphorylated by host in infected cells. Only dephosphorylated M2-1 is competent for viral mRNA binding. Cyclic turnover of phosphorylation-dephosphorylation of M2-1 is required for efficient viral transcription.

Its subcellular location is the virion. The protein resides in the host cytoplasm. The protein localises to the host nucleus. Its function is as follows. Acts as a tetrameric transcription processivity factor that binds in a competitive manner to RNA and the phosphoprotein (P) to prevent premature termination during transcription. Transcription anti-terminator that enhances readthrough of intergenic junctions during viral transcription. Preferentially binds to poly(A)-rich sequences. Plays a role in the association of the matrix protein with the nucleocapsid, which initiates assembly and budding. This chain is Protein M2-1 (M2-1), found in Bos taurus (Bovine).